We begin with the raw amino-acid sequence, 1532 residues long: IgA-specific serine endopeptidase autotransporter (1532 aa).

An N-terminal signal peptide occupies residues 1–27; it reads MKAKRFKINAISLSIFLAYALTPYSEA. One can recognise a Peptidase S6 domain in the interval 28–322; the sequence is ALVRDDVDYQ…NIYKKEFADK (295 aa). S278 is an active-site residue. Disordered regions lie at residues 979-1136 and 1166-1217; these read GRPV…KDNS and LEDE…NTEL. A compositionally biased stretch (polar residues) spans 989-1004; sequence AANTASQAQKATQTDG. The span at 1045–1101 shows a compositional bias: basic and acidic residues; sequence EAEKVARQKDEEAKRKAAEIARQQEEARKAAELAAKQKAEAERKARELARQKAEEAS. Basic residues predominate over residues 1107 to 1116; it reads KPKRRRRRAI. Basic and acidic residues predominate over residues 1207–1217; the sequence is SDKHPQDNTEL. An Autotransporter domain is found at 1280–1532; that stretch reads ADAEKNSVWM…SGQIKIQIRF (253 aa).

It localises to the periplasm. It is found in the secreted. The protein resides in the cell surface. Its subcellular location is the cell outer membrane. The catalysed reaction is Cleavage of immunoglobulin A molecules at certain Pro-|-Xaa bonds in the hinge region. No small molecule substrates are known.. Functionally, this protease is specific for immunoglobulin A. The chain is IgA-specific serine endopeptidase autotransporter (iga) from Neisseria gonorrhoeae.